The chain runs to 333 residues: Glycerol-3-phosphate dehydrogenase [NAD(P)+] (333 aa).

NADPH-binding residues include W11, R34, and K107. Residues K107, G136, and S138 each contribute to the sn-glycerol 3-phosphate site. A140 is an NADPH binding site. The sn-glycerol 3-phosphate site is built by K191, D244, S254, R255, and N256. The active-site Proton acceptor is the K191. Position 255 (R255) interacts with NADPH. NADPH is bound by residues I279 and E281.

This sequence belongs to the NAD-dependent glycerol-3-phosphate dehydrogenase family.

The protein resides in the cytoplasm. It carries out the reaction sn-glycerol 3-phosphate + NAD(+) = dihydroxyacetone phosphate + NADH + H(+). The enzyme catalyses sn-glycerol 3-phosphate + NADP(+) = dihydroxyacetone phosphate + NADPH + H(+). It functions in the pathway membrane lipid metabolism; glycerophospholipid metabolism. Functionally, catalyzes the reduction of the glycolytic intermediate dihydroxyacetone phosphate (DHAP) to sn-glycerol 3-phosphate (G3P), the key precursor for phospholipid synthesis. This is Glycerol-3-phosphate dehydrogenase [NAD(P)+] from Nitrosospira multiformis (strain ATCC 25196 / NCIMB 11849 / C 71).